The sequence spans 175 residues: Arginine repressor (175 aa).

The disordered stretch occupies residues 1–23 (MSVSTPERGGAEQGKGPAIARTR).

This sequence belongs to the ArgR family.

The protein resides in the cytoplasm. It participates in amino-acid biosynthesis; L-arginine biosynthesis [regulation]. In terms of biological role, regulates arginine biosynthesis genes. The polypeptide is Arginine repressor (Nocardia farcinica (strain IFM 10152)).